A 356-amino-acid polypeptide reads, in one-letter code: Glucan endo-1,3-beta-glucosidase, acidic isoform GL153 (356 aa).

A signal peptide spans 1–29 (MALCIKNGFLAAALVLVGLLMCSIQMIGA). A Pyrrolidone carboxylic acid modification is found at glutamine 30. The N-linked (GlcNAc...) asparagine glycan is linked to asparagine 95. Glutamate 124 (proton donor) is an active-site residue. The Nucleophile role is filled by glutamate 264.

It belongs to the glycosyl hydrolase 17 family. As to expression, is expressed primarily in epidermal cell of healthy plant, and following induction by ethylene, accumulates in mesophyll cells.

The protein localises to the secreted. It is found in the extracellular space. It carries out the reaction Hydrolysis of (1-&gt;3)-beta-D-glucosidic linkages in (1-&gt;3)-beta-D-glucans.. In terms of biological role, is thought to be an important plant defense-related product against fungal pathogens. This is Glucan endo-1,3-beta-glucosidase, acidic isoform GL153 (GGL4) from Nicotiana tabacum (Common tobacco).